We begin with the raw amino-acid sequence, 1070 residues long: Isoleucine--tRNA ligase (1070 aa).

A 'HIGH' region motif is present at residues 50-60 (PYTSGAAHMGT). Positions 606 to 610 (GMSKS) match the 'KMSKS' region motif. ATP is bound at residue Lys-609.

The protein belongs to the class-I aminoacyl-tRNA synthetase family. IleS type 2 subfamily. As to quaternary structure, monomer. Zn(2+) serves as cofactor.

It is found in the cytoplasm. The catalysed reaction is tRNA(Ile) + L-isoleucine + ATP = L-isoleucyl-tRNA(Ile) + AMP + diphosphate. Catalyzes the attachment of isoleucine to tRNA(Ile). As IleRS can inadvertently accommodate and process structurally similar amino acids such as valine, to avoid such errors it has two additional distinct tRNA(Ile)-dependent editing activities. One activity is designated as 'pretransfer' editing and involves the hydrolysis of activated Val-AMP. The other activity is designated 'posttransfer' editing and involves deacylation of mischarged Val-tRNA(Ile). This is Isoleucine--tRNA ligase from Halobacterium salinarum (strain ATCC 700922 / JCM 11081 / NRC-1) (Halobacterium halobium).